A 253-amino-acid polypeptide reads, in one-letter code: Diphthine synthase (253 aa).

Residues D83, L86, 111-112 (SI), L163, and L205 contribute to the S-adenosyl-L-methionine site.

This sequence belongs to the diphthine synthase family. Homodimer.

The enzyme catalyses 2-[(3S)-amino-3-carboxypropyl]-L-histidyl-[translation elongation factor 2] + 3 S-adenosyl-L-methionine = diphthine-[translation elongation factor 2] + 3 S-adenosyl-L-homocysteine + 3 H(+). It participates in protein modification; peptidyl-diphthamide biosynthesis. Functionally, S-adenosyl-L-methionine-dependent methyltransferase that catalyzes the trimethylation of the amino group of the modified target histidine residue in translation elongation factor 2 (EF-2), to form an intermediate called diphthine. The three successive methylation reactions represent the second step of diphthamide biosynthesis. This is Diphthine synthase from Pyrobaculum neutrophilum (strain DSM 2338 / JCM 9278 / NBRC 100436 / V24Sta) (Thermoproteus neutrophilus).